Here is a 151-residue protein sequence, read N- to C-terminus: ALKEIRMDNEREGFPITAIREIKILKKLHHENVIKLKEIVTSPGPEKDDQGRPDGNKYKRLAIYMVFEYMDHDLTGLADRPGMRFTVPQIKCYMRQLLTGLHYCHVNQVLHRDIKGSNLLIDNEGNLKLADFGLARSFSNEIMQTLQIESL.

A Protein kinase domain is found at 1 to 151 (ALKEIRMDNE…IMQTLQIESL (151 aa)). Residue Lys-3 participates in ATP binding. The active-site Proton acceptor is the Asp-113.

This sequence belongs to the protein kinase superfamily. CMGC Ser/Thr protein kinase family. CDC2/CDKX subfamily.

The catalysed reaction is L-seryl-[protein] + ATP = O-phospho-L-seryl-[protein] + ADP + H(+). The enzyme catalyses L-threonyl-[protein] + ATP = O-phospho-L-threonyl-[protein] + ADP + H(+). It catalyses the reaction [DNA-directed RNA polymerase] + ATP = phospho-[DNA-directed RNA polymerase] + ADP + H(+). This Pisum sativum (Garden pea) protein is Cell division control protein 2 homolog 2.